The primary structure comprises 810 residues: Sister chromatid cohesion 1 protein 2 (810 aa).

3 disordered regions span residues 200 to 244 (RDTT…LLEP), 273 to 315 (SHES…SECG), and 606 to 626 (MGASSTTSGTAHQTENAAETP). Basic and acidic residues-rich tracts occupy residues 220 to 234 (EPSRDHQNASRHRED) and 273 to 310 (SHESSGDNLHRDGHTENLESEKTSKKTSCEEMQHDRSL). Positions 606-622 (MGASSTTSGTAHQTENA) are enriched in polar residues.

The protein belongs to the rad21 family. In terms of assembly, component of the cohesin complex. Low expression in shoots, buds, siliques, leaves and roots. Found in, but not limited to, actively dividing cells: in procambium, protoderm and ground meristem in roots, and in shoot and floral meristems.

It localises to the nucleus. May be involved in sister chromatid cohesion during mitosis. This is Sister chromatid cohesion 1 protein 2 (SYN2) from Arabidopsis thaliana (Mouse-ear cress).